Reading from the N-terminus, the 436-residue chain is 2-(3-amino-3-carboxypropyl)histidine synthase subunit 1 (436 aa).

The interval 1 to 27 (MAEVKKSIPKRRFVGKKNRKENNLDGS) is disordered. The segment covering 7-19 (SIPKRRFVGKKNR) has biased composition (basic residues). Positions 130, 239, and 368 each coordinate [4Fe-4S] cluster. The tract at residues 417-436 (PNNPENRPLPNRKKTGPVSS) is disordered. Residues 426-436 (PNRKKTGPVSS) show a composition bias toward basic residues.

It belongs to the DPH1/DPH2 family. DPH1 subfamily. Component of the 2-(3-amino-3-carboxypropyl)histidine synthase complex composed of dph1, dph2, dph3 and a NADH-dependent reductase, predominantly cbr1. It depends on [4Fe-4S] cluster as a cofactor.

It localises to the cytoplasm. The catalysed reaction is L-histidyl-[translation elongation factor 2] + S-adenosyl-L-methionine = 2-[(3S)-amino-3-carboxypropyl]-L-histidyl-[translation elongation factor 2] + S-methyl-5'-thioadenosine + H(+). The protein operates within protein modification; peptidyl-diphthamide biosynthesis. Functionally, catalyzes the first step of diphthamide biosynthesis, a post-translational modification of histidine which occurs in elongation factor 2. Dph1 and dph2 transfer a 3-amino-3-carboxypropyl (ACP) group from S-adenosyl-L-methionine (SAM) to a histidine residue, the reaction is assisted by a reduction system comprising dph3 and a NADH-dependent reductase, predominantly cbr1. In Schizosaccharomyces pombe (strain 972 / ATCC 24843) (Fission yeast), this protein is 2-(3-amino-3-carboxypropyl)histidine synthase subunit 1 (dph1).